Reading from the N-terminus, the 448-residue chain is Protein ECM7 (448 aa).

Topologically, residues 1–28 (MVMSRIRDTIARPFQNLTALEKVVQWLR) are cytoplasmic. A helical transmembrane segment spans residues 29 to 49 (LGTTLLIISFGLALTVGPLSS). At 50-204 (PRTLYMSRLD…MRSLKHKKAN (155 aa)) the chain is on the extracellular side. A helical membrane pass occupies residues 205–225 (VLHLLYAVISFQVCMLFFMIW). Over 226–246 (YYYIKGRFMNALKERALVHIN) the chain is Cytoplasmic. A helical membrane pass occupies residues 247–267 (SLLSLVVFIGGLISSISLAWV). Topologically, residues 268 to 287 (NYTIQSRINTELEAFGFSYH) are extracellular. A helical transmembrane segment spans residues 288–308 (LGVTWFALLWCFAGLISVSCL). The Cytoplasmic portion of the chain corresponds to 309–448 (AWSGLEWCIS…VIKPSSALQF (140 aa)). Composition is skewed to polar residues over residues 351–363 (YSQR…STSG) and 383–406 (VDLN…NISN). Disordered stretches follow at residues 351-411 (YSQR…GKHE) and 427-448 (RSSN…ALQF).

It localises to the membrane. Its function is as follows. May be involved in cell wall organization and biogenesis. The sequence is that of Protein ECM7 (ECM7) from Saccharomyces cerevisiae (strain ATCC 204508 / S288c) (Baker's yeast).